Consider the following 375-residue polypeptide: MSFYQPSLSLYDVLNALSNQTGQRGQQGYPRQPQRPQRYHPHYGQVHVGGHHPRHHPLYSRYNGVPNTYYYQFPGQAYYYSPEYGYDDEDGEEEDQDEDMVGDSGTTRQEDGGEDSNSRRYPSYYHCNTARNNRTNQQANSLNDLLTALIGVPPYEGTEPEIEANTEQEGEKGEEKDKKDKSEAPKEEAGETNKEKPLNQLEESSRPPLAKKSSSFAHLQAPSPIPDPLQVSKPETRMDLPFSPEVNVYDTEDTYVVVLALPGANSRAFHIDYHPSSHEMLIKGKIEDRVGIDEKFLKITELKYGAFERTVKFPVLPRIKDEEIKATYNNGLLQIKVPKIVNDTEKPKPKKRIAIEEIPDEELEFEENPNPTVEN.

Disordered regions lie at residues 21–59 (TGQRGQQGYPRQPQRPQRYHPHYGQVHVGGHHPRHHPLY), 81–127 (SPEY…YYHC), 154–238 (PYEG…ETRM), and 347–375 (PKPKKRIAIEEIPDEELEFEENPNPTVEN). Positions 22–48 (GQRGQQGYPRQPQRPQRYHPHYGQVHV) are enriched in low complexity. Residues 49–58 (GGHHPRHHPL) are compositionally biased toward basic residues. Acidic residues-rich tracts occupy residues 85 to 101 (GYDDEDGEEEDQDEDMV) and 158 to 168 (TEPEIEANTEQ). Basic and acidic residues predominate over residues 169–197 (EGEKGEEKDKKDKSEAPKEEAGETNKEKP). Phosphoserine is present on residues Ser-182, Ser-213, Ser-214, Ser-215, and Ser-223. The 120-residue stretch at 237–356 (RMDLPFSPEV…PKPKKRIAIE (120 aa)) folds into the sHSP domain. Over residues 357–367 (EIPDEELEFEE) the composition is skewed to acidic residues.

It belongs to the small heat shock protein (HSP20) family. Forms oligomeric complexes. Interacts with itself.

This Saccharomyces cerevisiae (strain ATCC 204508 / S288c) (Baker's yeast) protein is Heat shock protein 42 (HSP42).